Reading from the N-terminus, the 498-residue chain is ATP synthase subunit beta, chloroplastic (498 aa).

Residue 172–179 coordinates ATP; sequence GGAGVGKT.

The protein belongs to the ATPase alpha/beta chains family. In terms of assembly, F-type ATPases have 2 components, CF(1) - the catalytic core - and CF(0) - the membrane proton channel. CF(1) has five subunits: alpha(3), beta(3), gamma(1), delta(1), epsilon(1). CF(0) has four main subunits: a(1), b(1), b'(1) and c(9-12).

It localises to the plastid. The protein localises to the chloroplast thylakoid membrane. It catalyses the reaction ATP + H2O + 4 H(+)(in) = ADP + phosphate + 5 H(+)(out). In terms of biological role, produces ATP from ADP in the presence of a proton gradient across the membrane. The catalytic sites are hosted primarily by the beta subunits. The sequence is that of ATP synthase subunit beta, chloroplastic from Pelargonium hortorum (Common geranium).